The chain runs to 441 residues: Ribosomal protein uS12 methylthiotransferase RimO (441 aa).

The region spanning 7–117 is the MTTase N-terminal domain; the sequence is PKISFVSLGC…VLEAVHRALP (111 aa). [4Fe-4S] cluster is bound by residues cysteine 16, cysteine 52, cysteine 81, cysteine 148, cysteine 152, and cysteine 155. The 238-residue stretch at 134–371 folds into the Radical SAM core domain; that stretch reads LTPRHYAYLK…MARQQKISAR (238 aa). One can recognise a TRAM domain in the interval 374–440; it reads KRKVGTRQQV…AYDLHGTVAG (67 aa).

Belongs to the methylthiotransferase family. RimO subfamily. [4Fe-4S] cluster serves as cofactor.

The protein resides in the cytoplasm. The enzyme catalyses L-aspartate(89)-[ribosomal protein uS12]-hydrogen + (sulfur carrier)-SH + AH2 + 2 S-adenosyl-L-methionine = 3-methylsulfanyl-L-aspartate(89)-[ribosomal protein uS12]-hydrogen + (sulfur carrier)-H + 5'-deoxyadenosine + L-methionine + A + S-adenosyl-L-homocysteine + 2 H(+). Catalyzes the methylthiolation of an aspartic acid residue of ribosomal protein uS12. The chain is Ribosomal protein uS12 methylthiotransferase RimO from Rhodopseudomonas palustris (strain BisA53).